The primary structure comprises 435 residues: ATP-dependent protease ATPase subunit HslU (435 aa).

ATP-binding positions include V18, 60-65, D248, E313, and R385; that span reads GVGKTE.

Belongs to the ClpX chaperone family. HslU subfamily. In terms of assembly, a double ring-shaped homohexamer of HslV is capped on each side by a ring-shaped HslU homohexamer. The assembly of the HslU/HslV complex is dependent on binding of ATP.

Its subcellular location is the cytoplasm. Its function is as follows. ATPase subunit of a proteasome-like degradation complex; this subunit has chaperone activity. The binding of ATP and its subsequent hydrolysis by HslU are essential for unfolding of protein substrates subsequently hydrolyzed by HslV. HslU recognizes the N-terminal part of its protein substrates and unfolds these before they are guided to HslV for hydrolysis. The chain is ATP-dependent protease ATPase subunit HslU from Rhodospirillum rubrum (strain ATCC 11170 / ATH 1.1.1 / DSM 467 / LMG 4362 / NCIMB 8255 / S1).